We begin with the raw amino-acid sequence, 253 residues long: Allene oxide cyclase 2, chloroplastic (253 aa).

Residues M1 to R77 constitute a chloroplast transit peptide.

Belongs to the allene oxide cyclase family. As to expression, highly expressed in fully developed leaves.

It is found in the plastid. Its subcellular location is the chloroplast. It catalyses the reaction (9Z,13S,15Z)-12,13-epoxyoctadeca-9,11,15-trienoate = (9S,13S,15Z)-12-oxophyto-10,15-dienoate. Functionally, involved in the production of 12-oxo-phytodienoic acid (OPDA), a precursor of jasmonic acid. The polypeptide is Allene oxide cyclase 2, chloroplastic (AOC2) (Arabidopsis thaliana (Mouse-ear cress)).